Consider the following 392-residue polypeptide: Major outer membrane porin (392 aa).

The first 22 residues, 1–22 (MKKLLKSALLFAAAGSALSLQA), serve as a signal peptide directing secretion.

It belongs to the chlamydial porin (CP) (TC 1.B.2) family. As to quaternary structure, part of a disulfide cross-linked outer membrane complex (COMC) composed of the major outer membrane porin (MOMP), the small cysteine-rich protein (OmcA) and the large cysteine-rich periplasmic protein (OmcB).

Its subcellular location is the cell outer membrane. Its function is as follows. In elementary bodies (EBs, the infectious stage, which is able to survive outside the host cell) provides the structural integrity of the outer envelope through disulfide cross-links with the small cysteine-rich protein and the large cysteine-rich periplasmic protein. It has been described in publications as the Sarkosyl-insoluble COMC (Chlamydia outer membrane complex), and serves as the functional equivalent of peptidoglycan. In terms of biological role, permits diffusion of specific solutes through the outer membrane. The chain is Major outer membrane porin (ompA) from Chlamydia psittaci (Chlamydophila psittaci).